Consider the following 223-residue polypeptide: DnaJ homolog subfamily B member 9 (223 aa).

The N-terminal stretch at 1-23 (MATPQSIFIFAICILMITELILA) is a signal peptide. One can recognise a J domain in the interval 26-90 (SYYDILGVPK…NRRKEYDTLG (65 aa)). The divergent targeting domain stretch occupies residues 91-223 (HSAFTNGKGQ…VTTYTDCSGQ (133 aa)). Residue Ser-133 is modified to Phosphoserine.

As to quaternary structure, interacts with HSPA5/BiP; interaction is direct. Interacts with ERN1/IRE1 (via the luminal region). Interacts with DERL1.

The protein localises to the endoplasmic reticulum lumen. Co-chaperone for Hsp70 protein HSPA5/BiP that acts as a key repressor of the ERN1/IRE1-mediated unfolded protein response (UPR). J domain-containing co-chaperones stimulate the ATPase activity of Hsp70 proteins and are required for efficient substrate recognition by Hsp70 proteins. In the unstressed endoplasmic reticulum, interacts with the luminal region of ERN1/IRE1 and selectively recruits HSPA5/BiP: HSPA5/BiP disrupts the dimerization of the active ERN1/IRE1 luminal region, thereby inactivating ERN1/IRE1. Also involved in endoplasmic reticulum-associated degradation (ERAD) of misfolded proteins. Required for survival of B-cell progenitors and normal antibody production. This is DnaJ homolog subfamily B member 9 from Pongo abelii (Sumatran orangutan).